A 306-amino-acid polypeptide reads, in one-letter code: Probable protein ABIL1 (306 aa).

A disordered region spans residues 200 to 236 (KNSKTNGARQSEFVLEETKATKPASRGKEPSTSPLPK).

It belongs to the ABI family. In terms of assembly, binds SCAR.

It localises to the cytoplasm. Its subcellular location is the cytoskeleton. Involved in regulation of actin and microtubule organization. Part of a WAVE complex that activates the Arp2/3 complex. The protein is Probable protein ABIL1 of Oryza sativa subsp. japonica (Rice).